A 283-amino-acid polypeptide reads, in one-letter code: Non-selective voltage-gated ion channel VDAC1 (283 aa).

Ala-2 carries the N-acetylalanine modification. Lys-12 is an ATP binding site. Lys-12 participates in a covalent cross-link: Glycyl lysine isopeptide (Lys-Gly) (interchain with G-Cter in ubiquitin). Residue Ser-13 is modified to Phosphoserine. The residue at position 19 (Thr-19) is a Phosphothreonine. Lys-20 is an ATP binding site. Position 20 is an N6-acetyllysine; alternate (Lys-20). The residue at position 20 (Lys-20) is an N6-succinyllysine; alternate. Residue Lys-20 forms a Glycyl lysine isopeptide (Lys-Gly) (interchain with G-Cter in ubiquitin); alternate linkage. 2 beta stranded membrane passes run 26–35 (LIKLDLKTKS) and 39–47 (LEFTSSGSA). Glycyl lysine isopeptide (Lys-Gly) (interchain with G-Cter in ubiquitin) cross-links involve residues Lys-53 and Lys-61. The chain crosses the membrane as a beta stranded span at residues 54–64 (VTGSLETKYRW). Tyr-67 carries the post-translational modification Phosphotyrosine. Transmembrane regions (beta stranded) follow at residues 69 to 76 (LTFTEKWN), 80 to 89 (TLGTEITVED), and 95 to 104 (LKLTFDSSFS). Phosphothreonine is present on Thr-107. An N6-acetyllysine; alternate modification is found at Lys-109. Residue Lys-109 forms a Glycyl lysine isopeptide (Lys-Gly) (interchain with G-Cter in ubiquitin); alternate linkage. Residue Lys-110 forms a Glycyl lysine isopeptide (Lys-Gly) (interchain with G-Cter in ubiquitin) linkage. Beta stranded transmembrane passes span 111–120 (NAKIKTGYKR), 123–130 (INLGCDMD), 137–145 (SIRGALVLG), and 150–158 (LAGYQMNFE). A Glycyl lysine isopeptide (Lys-Gly) (interchain with G-Cter in ubiquitin) cross-link involves residue Lys-161. 6 beta stranded membrane passes run 163 to 175 (RVTQ…GYKT), 178 to 185 (FQLHTNVN), 189 to 198 (EFGGSIYQKV), 202 to 211 (LETAVNLAWT), 218 to 227 (RFGIAAKYQI), and 231 to 238 (ACFSAKVN). Residue Ser-193 is modified to Phosphoserine; by NEK1. Ser-240 carries the post-translational modification Phosphoserine. 242–244 (LIG) is a binding site for NAD(+). Residues 242–251 (LIGLGYTQTL) traverse the membrane as a beta stranded segment. Lys-252 carries the N6-acetyllysine modification. A beta stranded transmembrane segment spans residues 254–263 (GIKLTLSALL). NAD(+) is bound at residue 260–264 (SALLD). Lys-266 is modified (N6-acetyllysine; alternate). Lys-266 participates in a covalent cross-link: Glycyl lysine isopeptide (Lys-Gly) (interchain with G-Cter in ubiquitin); alternate. The beta stranded transmembrane segment at 273–282 (HKLGLGLEFQ) threads the bilayer. Lys-274 participates in a covalent cross-link: Glycyl lysine isopeptide (Lys-Gly) (interchain with G-Cter in ubiquitin).

The protein belongs to the eukaryotic mitochondrial porin family. As to quaternary structure, homodimer and homotrimer; in response to cyclic AMP or calcium; oligomerization is required for scramblase activity. Component of the mitochondrial permeability transition pore complex (mPTPC), at least composed of SPG7, VDAC1 and PPIF. Interacts with SPG7, NIPSNAP2 and SLC25A30. Interacts with hexokinases including HK1. The HK1-VDAC1 complex interacts with ATF2. Interacts with BCL2L1. Interacts with BAK1. Interacts with RTL10/BOP (via BH3 domain). Interacts with amyloid-beta and APP; induces VDAC1 dephosphorylation. Interacts with TMEM41B. Interacts with BCAP31. Interacts with HSPA9; this interaction couples ITPR1 to VDAC1. In terms of assembly, (Microbial infection) Interacts with influenza A virus PB1-F2 protein. Post-translationally, phosphorylation at Ser-193 by NEK1 promotes the closed conformational state preventing excessive mitochondrial membrane permeability and subsequent apoptotic cell death after injury. Phosphorylation by the AKT-GSK3B axis stabilizes the protein probably by preventing ubiquitin-mediated proteasomal degradation. Ubiquitinated. Undergoes monoubiquitination and polyubiquitination by PRKN; monoubiquitination at Lys-274 inhibits apoptosis, whereas polyubiquitination leads to its degradation and promotes mitophagy. Deubiquitinated by USP30. As to expression, expressed in erythrocytes (at protein level). Expressed in heart, liver and skeletal muscle.

Its subcellular location is the mitochondrion outer membrane. It localises to the cell membrane. The protein resides in the membrane raft. It catalyses the reaction chloride(in) = chloride(out). The enzyme catalyses K(+)(in) = K(+)(out). It carries out the reaction ATP(in) = ATP(out). The catalysed reaction is Ca(2+)(in) = Ca(2+)(out). It catalyses the reaction Na(+)(in) = Na(+)(out). The enzyme catalyses Mg(2+)(in) = Mg(2+)(out). It carries out the reaction L-glutamate(out) = L-glutamate(in). The catalysed reaction is dopamine(out) = dopamine(in). It catalyses the reaction acetylcholine(in) = acetylcholine(out). The enzyme catalyses Fe(III)-[cytochrome c](out) = Fe(III)-[cytochrome c](in). It carries out the reaction a 1,2-diacyl-sn-glycero-3-phosphocholine(in) = a 1,2-diacyl-sn-glycero-3-phosphocholine(out). The catalysed reaction is a 1,2-diacyl-sn-glycero-3-phospho-L-serine(in) = a 1,2-diacyl-sn-glycero-3-phospho-L-serine(out). Its activity is regulated as follows. Inhibited by nitric oxide. Functionally, non-selective voltage-gated ion channel that mediates the transport of anions and cations through the mitochondrion outer membrane and plasma membrane. The channel at the outer mitochondrial membrane allows diffusion of small hydrophilic molecules; in the plasma membrane it is involved in cell volume regulation and apoptosis. It adopts an open conformation at low or zero membrane potential and a closed conformation at potentials above 30-40 mV. The open state has a weak anion selectivity whereas the closed state is cation-selective. Binds various signaling molecules, including the sphingolipid ceramide, the phospholipid phosphatidylcholine, and the sterols cholesterol and oxysterol. In depolarized mitochondria, acts downstream of PRKN and PINK1 to promote mitophagy or prevent apoptosis; polyubiquitination by PRKN promotes mitophagy, while monoubiquitination by PRKN decreases mitochondrial calcium influx which ultimately inhibits apoptosis. May participate in the formation of the permeability transition pore complex (PTPC) responsible for the release of mitochondrial products that triggers apoptosis. May mediate ATP export from cells. Part of a complex composed of HSPA9, ITPR1 and VDAC1 that regulates mitochondrial calcium-dependent apoptosis by facilitating calcium transport from the ER lumen to the mitochondria intermembrane space thus providing calcium for the downstream calcium channel MCU that directly releases it into mitochondria matrix. Mediates cytochrome c efflux. Its function is as follows. Catalyzes the scrambling of phospholipids across the outer mitochondrial membrane; the mechanism is unrelated to channel activity and is capable of translocating both anionic and zwitterionic phospholipids. The sequence is that of Non-selective voltage-gated ion channel VDAC1 from Homo sapiens (Human).